The sequence spans 294 residues: Golgi phosphoprotein 3 homolog sauron (294 aa).

The segment at 1 to 52 (MNRSDGLVRRSVKPRENGGAEGGLNANTPDDNQDALDNLKDQEDNIDDGDSK) is disordered. Residues 37-52 (DNLKDQEDNIDDGDSK) show a composition bias toward basic and acidic residues. 4 residues coordinate a 1,2-diacyl-sn-glycero-3-phospho-(1D-myo-inositol 4-phosphate): Trp77, Arg86, Lys167, and Arg170. Residues 186-197 (EKQNFLLFDMTT) form a beta-hairpin required for oligomerization region.

The protein belongs to the GOLPH3/VPS74 family. Homooligomer. Interacts with botv, Ext2 and ttv. Interacts with Vti1. Interacts with Vps35, Rab5, Chc, Rab11, zip, Pav and Septin1.

The protein resides in the golgi apparatus membrane. It is found in the cytoplasmic vesicle. It localises to the cleavage furrow. In terms of biological role, phosphatidylinositol-4-phosphate-binding protein that links Golgi membranes to the cytoskeleton and may participate in the tensile force required for vesicle budding from the Golgi. Thereby, may play a role in Golgi membrane trafficking and could indirectly give its flattened shape to the Golgi apparatus. May also bind to the coatomer to regulate Golgi membrane trafficking. May play a role in anterograde transport from the Golgi to the plasma membrane and regulate secretion. Also involved in the control of the localization of Golgi enzymes through interaction with their cytoplasmic part. Functions in cytokinesis by regulating contractile ring formation and vesicle trafficking during cleavage furrow ingression. May also have a role in the intital steps of central spindle formation. Can also bind phosphatidylinositol-3-phosphate and phosphatidylinositol-5-phosphate in vitro. The sequence is that of Golgi phosphoprotein 3 homolog sauron from Drosophila melanogaster (Fruit fly).